Reading from the N-terminus, the 403-residue chain is Semaphorin-like protein A39 (403 aa).

The N-terminal stretch at methionine 1–glycine 14 is a signal peptide. One can recognise a Sema domain in the interval isoleucine 15 to methionine 403.

Belongs to the semaphorin family. Interacts with host VESPR.

Its subcellular location is the secreted. Acts as a semaphorin-like protein and binds to host plexin C1 receptor. May alter the movement of host plexin C1-expressing cells including dendritic cells, monocytes, or granulocytes in the proximity of infected cells. May also regulate host cell cytoskeleton of neighboring cells to improve viral infection. The sequence is that of Semaphorin-like protein A39 from Homo sapiens (Human).